We begin with the raw amino-acid sequence, 332 residues long: Serine, glycine, tyrosine and glutamine-rich protein (332 aa).

Residues 1-17 form the signal peptide; sequence MMKTVLLLVVLVGVAYC. Residues 39–81 are disordered; the sequence is SSSSSSSSSSGGGGSSGGGASGGGGGGGSSGGGGASGGGGGGS. Residues 48–81 show a composition bias toward gly residues; sequence SGGGGSSGGGASGGGGGGGSSGGGGASGGGGGGS.

In terms of tissue distribution, prismatic layer of shell (at protein level). Expressed primarily in the mantle with highest level in the mantle edge and lower level in the mantle pallium.

The protein resides in the secreted. This Margaritifera margaritifera (Freshwater pearl mussel) protein is Serine, glycine, tyrosine and glutamine-rich protein.